A 125-amino-acid chain; its full sequence is uncharacterized protein (125 aa).

Its subcellular location is the mitochondrion. This is an uncharacterized protein from Paramecium tetraurelia.